We begin with the raw amino-acid sequence, 119 residues long: Large ribosomal subunit protein bL20 (119 aa).

It belongs to the bacterial ribosomal protein bL20 family.

Its function is as follows. Binds directly to 23S ribosomal RNA and is necessary for the in vitro assembly process of the 50S ribosomal subunit. It is not involved in the protein synthesizing functions of that subunit. The polypeptide is Large ribosomal subunit protein bL20 (Levilactobacillus brevis (strain ATCC 367 / BCRC 12310 / CIP 105137 / JCM 1170 / LMG 11437 / NCIMB 947 / NCTC 947) (Lactobacillus brevis)).